The primary structure comprises 324 residues: MLSKKFTPLSLKNAAKCINNSLRSTYAITGVNLTRGLATNSKVDPKTYAPKPEFSSIAVREMLRKSCLHEFTDEEVATRIELAAAYRLFGLEHWNENILNHLTAKVEEPDGTASFLINPYGLRYGEITASSLIKVDEDGNIKHPGVTGDVFGINRAGYVIHSAIHRARPDVKSIMHNHYPYAAGVSCVKHGFLELAQTSHQSGPVTYHDYHGIVVDKGEQKSLAEDIANKDILILRNHGIITAAESVGAAYYLMYQFLAATEIQTHASANALGDMNNLFIPNNKLVEKTFDVTREKHFSGAKYGIKELSAYMRLLDDLDSSYRT.

Belongs to the aldolase class II family. Adducin subfamily.

This is Adducin-related protein C1289.14 from Schizosaccharomyces pombe (strain 972 / ATCC 24843) (Fission yeast).